The chain runs to 730 residues: Translation initiation factor IF-2 (730 aa).

A disordered region spans residues 48 to 151 (GNGNQKQGGS…NKAKPLPEKV (104 aa)). Basic and acidic residues-rich tracts occupy residues 61-77 (EQQKKAGEKKPAQDHGQ) and 89-104 (NQHDRSQGSDQQKGKA). A compositionally biased stretch (basic residues) spans 110–123 (KPKHKGNKNKKQHQ). Residues 137-148 (RQPEMNKAKPLP) show a composition bias toward basic and acidic residues. Positions 231-400 (ERPPVVTIMG…LLVAEVEELK (170 aa)) constitute a tr-type G domain. Residues 240 to 247 (GHVDHGKT) form a G1 region. 240-247 (GHVDHGKT) serves as a coordination point for GTP. The segment at 265–269 (GITQH) is G2. Positions 286–289 (DTPG) are G3. GTP contacts are provided by residues 286–290 (DTPGH) and 340–343 (NKMD). A G4 region spans residues 340–343 (NKMD). The segment at 376-378 (SAL) is G5.

The protein belongs to the TRAFAC class translation factor GTPase superfamily. Classic translation factor GTPase family. IF-2 subfamily.

It localises to the cytoplasm. One of the essential components for the initiation of protein synthesis. Protects formylmethionyl-tRNA from spontaneous hydrolysis and promotes its binding to the 30S ribosomal subunits. Also involved in the hydrolysis of GTP during the formation of the 70S ribosomal complex. The polypeptide is Translation initiation factor IF-2 (Halalkalibacterium halodurans (strain ATCC BAA-125 / DSM 18197 / FERM 7344 / JCM 9153 / C-125) (Bacillus halodurans)).